Reading from the N-terminus, the 330-residue chain is DCD domain-containing protein NRP-B (330 aa).

The interval 137 to 181 (HPSKSSKKNNNLNKKHGDNNNNDNNKDSKAAGDKRFKTLPPSESL) is disordered. A compositionally biased stretch (basic and acidic residues) spans 160–172 (NNKDSKAAGDKRF). A DCD domain is found at 185-317 (ETIGGYIFVC…ALSLLDIFAE (133 aa)).

The protein localises to the cytoplasm. Functionally, involved in stress signaling pathway that mediates cell death in response to endoplasmic reticulum (ER) stress and osmotic stress. In Glycine max (Soybean), this protein is DCD domain-containing protein NRP-B.